Reading from the N-terminus, the 104-residue chain is NADH-quinone oxidoreductase subunit K (104 aa).

The next 3 helical transmembrane spans lie at 7 to 27 (PDMAMLLAAGLFALGLLGVLV), 31 to 51 (LLFMLMSIEIMLNAAALAFVA), and 63 to 83 (VMFLMILSLAAAEAAIGLAIL).

It belongs to the complex I subunit 4L family. In terms of assembly, NDH-1 is composed of 14 different subunits. Subunits NuoA, H, J, K, L, M, N constitute the membrane sector of the complex.

Its subcellular location is the cell inner membrane. It carries out the reaction a quinone + NADH + 5 H(+)(in) = a quinol + NAD(+) + 4 H(+)(out). Functionally, NDH-1 shuttles electrons from NADH, via FMN and iron-sulfur (Fe-S) centers, to quinones in the respiratory chain. The immediate electron acceptor for the enzyme in this species is believed to be ubiquinone. Couples the redox reaction to proton translocation (for every two electrons transferred, four hydrogen ions are translocated across the cytoplasmic membrane), and thus conserves the redox energy in a proton gradient. This chain is NADH-quinone oxidoreductase subunit K, found in Gluconacetobacter diazotrophicus (strain ATCC 49037 / DSM 5601 / CCUG 37298 / CIP 103539 / LMG 7603 / PAl5).